Here is a 195-residue protein sequence, read N- to C-terminus: Achaete-scute homolog 1b (195 aa).

Residues 66–118 (MAVARRNERERNRVKQVNMGFQTLRQHVPNGAANKKMSKVETLRSAVEYIRAL) form the bHLH domain. The segment at 141 to 164 (VSNAYSAGPESPHSAYSSDEGSYE) is disordered.

Efficient DNA binding requires dimerization with another bHLH protein. As to expression, in the 24 hours embryo, expressed in hindbrain close to the anterior and posterior boundaries of rhombomeres 2-6 and in ventral cells close to the floor plate of most rhombomeres. Also expressed in the telencephalon, diencephalon, tegmentum and spinal cord at sites distinct from those expressing ascl1a. Not expressed in the adenohypophysis.

The protein localises to the nucleus. In terms of biological role, transcriptional regulator. May mediate transcription activation by binding to the E box-containing promoter. Involved in neurogenesis. Involved in maintaining rhombomere boundaries in the hindbrain, probably via up-regulation of delta expression. May mediate transcription activation by binding to the E box-containing promoter. In Danio rerio (Zebrafish), this protein is Achaete-scute homolog 1b.